The chain runs to 401 residues: Imidazolonepropionase (401 aa).

The Fe(3+) site is built by His-66 and His-68. Residues His-66 and His-68 each contribute to the Zn(2+) site. Arg-75, Tyr-138, and His-171 together coordinate 4-imidazolone-5-propanoate. Tyr-138 is a binding site for N-formimidoyl-L-glutamate. His-236 serves as a coordination point for Fe(3+). Zn(2+) is bound at residue His-236. Residue Gln-239 coordinates 4-imidazolone-5-propanoate. A Fe(3+)-binding site is contributed by Asp-311. Asp-311 contributes to the Zn(2+) binding site. Residues Asn-313 and Gly-315 each coordinate N-formimidoyl-L-glutamate. Thr-316 is a 4-imidazolone-5-propanoate binding site.

The protein belongs to the metallo-dependent hydrolases superfamily. HutI family. Zn(2+) is required as a cofactor. Requires Fe(3+) as cofactor.

It localises to the cytoplasm. The catalysed reaction is 4-imidazolone-5-propanoate + H2O = N-formimidoyl-L-glutamate. It participates in amino-acid degradation; L-histidine degradation into L-glutamate; N-formimidoyl-L-glutamate from L-histidine: step 3/3. Its function is as follows. Catalyzes the hydrolytic cleavage of the carbon-nitrogen bond in imidazolone-5-propanoate to yield N-formimidoyl-L-glutamate. It is the third step in the universal histidine degradation pathway. The polypeptide is Imidazolonepropionase (Pseudomonas putida (Arthrobacter siderocapsulatus)).